The following is a 151-amino-acid chain: SsrA-binding protein (151 aa).

It belongs to the SmpB family.

The protein localises to the cytoplasm. In terms of biological role, required for rescue of stalled ribosomes mediated by trans-translation. Binds to transfer-messenger RNA (tmRNA), required for stable association of tmRNA with ribosomes. tmRNA and SmpB together mimic tRNA shape, replacing the anticodon stem-loop with SmpB. tmRNA is encoded by the ssrA gene; the 2 termini fold to resemble tRNA(Ala) and it encodes a 'tag peptide', a short internal open reading frame. During trans-translation Ala-aminoacylated tmRNA acts like a tRNA, entering the A-site of stalled ribosomes, displacing the stalled mRNA. The ribosome then switches to translate the ORF on the tmRNA; the nascent peptide is terminated with the 'tag peptide' encoded by the tmRNA and targeted for degradation. The ribosome is freed to recommence translation, which seems to be the essential function of trans-translation. The protein is SsrA-binding protein of Chlamydia muridarum (strain MoPn / Nigg).